A 126-amino-acid polypeptide reads, in one-letter code: Glycine cleavage system H protein (126 aa).

A Lipoyl-binding domain is found at 22 to 103 (KAYIGITDYA…PYGSWMALVE (82 aa)). Position 63 is an N6-lipoyllysine (K63).

This sequence belongs to the GcvH family. In terms of assembly, the glycine cleavage system is composed of four proteins: P, T, L and H. (R)-lipoate serves as cofactor.

Functionally, the glycine cleavage system catalyzes the degradation of glycine. The H protein shuttles the methylamine group of glycine from the P protein to the T protein. The polypeptide is Glycine cleavage system H protein (Thermoanaerobacter sp. (strain X514)).